A 220-amino-acid chain; its full sequence is Endonuclease NucS (220 aa).

Belongs to the NucS endonuclease family.

The protein localises to the cytoplasm. In terms of biological role, cleaves both 3' and 5' ssDNA extremities of branched DNA structures. This is Endonuclease NucS from Mycobacterium leprae (strain TN).